We begin with the raw amino-acid sequence, 291 residues long: Ribosomal RNA small subunit methyltransferase H (291 aa).

Residues 31–33 (GGY), D49, F76, D97, and Q104 each bind S-adenosyl-L-methionine.

This sequence belongs to the methyltransferase superfamily. RsmH family.

It is found in the cytoplasm. The enzyme catalyses cytidine(1402) in 16S rRNA + S-adenosyl-L-methionine = N(4)-methylcytidine(1402) in 16S rRNA + S-adenosyl-L-homocysteine + H(+). Specifically methylates the N4 position of cytidine in position 1402 (C1402) of 16S rRNA. In Anaplasma marginale (strain St. Maries), this protein is Ribosomal RNA small subunit methyltransferase H.